Reading from the N-terminus, the 335-residue chain is Ubiquinone biosynthesis protein COQ4, mitochondrial (335 aa).

The N-terminal 10 residues, 1–10 (MLRLSLLRST), are a transit peptide targeting the mitochondrion. Zn(2+) is bound by residues His210, Asp211, His214, and Glu226.

This sequence belongs to the COQ4 family. As to quaternary structure, component of a multi-subunit COQ enzyme complex, composed of at least COQ3, COQ4, COQ5, COQ6, COQ7 and COQ9. Interacts with COQ3. It depends on Zn(2+) as a cofactor.

It localises to the mitochondrion inner membrane. The enzyme catalyses 4-hydroxy-3-methoxy-5-(all-trans-hexaprenyl)benzoate + H(+) = 2-methoxy-6-(all-trans-hexaprenyl)phenol + CO2. Its pathway is cofactor biosynthesis; ubiquinone biosynthesis. Its function is as follows. Lyase that catalyzes the C1-decarboxylation of 4-hydroxy-3-methoxy-5-(all-trans-hexaprenyl)benzoic acid into 2-methoxy-6-(all-trans-hexaprenyl)phenol during ubiquinone biosynthesis. The sequence is that of Ubiquinone biosynthesis protein COQ4, mitochondrial from Saccharomyces cerevisiae (strain YJM789) (Baker's yeast).